We begin with the raw amino-acid sequence, 431 residues long: Histidinol dehydrogenase (431 aa).

NAD(+) contacts are provided by tyrosine 127, glutamine 189, and asparagine 212. The substrate site is built by serine 237, glutamine 259, and histidine 262. 2 residues coordinate Zn(2+): glutamine 259 and histidine 262. Residues glutamate 326 and histidine 327 each act as proton acceptor in the active site. The substrate site is built by histidine 327, aspartate 360, glutamate 414, and histidine 419. Zn(2+) is bound at residue aspartate 360. Histidine 419 is a Zn(2+) binding site.

Belongs to the histidinol dehydrogenase family. Zn(2+) serves as cofactor.

The catalysed reaction is L-histidinol + 2 NAD(+) + H2O = L-histidine + 2 NADH + 3 H(+). Its pathway is amino-acid biosynthesis; L-histidine biosynthesis; L-histidine from 5-phospho-alpha-D-ribose 1-diphosphate: step 9/9. Catalyzes the sequential NAD-dependent oxidations of L-histidinol to L-histidinaldehyde and then to L-histidine. The protein is Histidinol dehydrogenase of Xanthomonas euvesicatoria pv. vesicatoria (strain 85-10) (Xanthomonas campestris pv. vesicatoria).